The primary structure comprises 296 residues: NADH-ubiquinone oxidoreductase chain 2 (296 aa).

8 helical membrane passes run 5–25, 49–69, 71–91, 114–134, 167–187, 209–229, 242–262, and 276–296; these read LCLF…GLWL, YFLI…NQSF, FLIP…MWLV, LLGL…SAFI, FFLM…AVIL, ASIS…GFFI, LLVL…FSIA, and KMEI…LFFL.

The protein belongs to the complex I subunit 2 family.

The protein localises to the mitochondrion inner membrane. The catalysed reaction is a ubiquinone + NADH + 5 H(+)(in) = a ubiquinol + NAD(+) + 4 H(+)(out). Functionally, core subunit of the mitochondrial membrane respiratory chain NADH dehydrogenase (Complex I) that is believed to belong to the minimal assembly required for catalysis. Complex I functions in the transfer of electrons from NADH to the respiratory chain. The immediate electron acceptor for the enzyme is believed to be ubiquinone. This chain is NADH-ubiquinone oxidoreductase chain 2 (ND2), found in Artemia franciscana (Brine shrimp).